A 128-amino-acid chain; its full sequence is Ribonuclease P protein component (128 aa).

This sequence belongs to the RnpA family. In terms of assembly, consists of a catalytic RNA component (M1 or rnpB) and a protein subunit.

The enzyme catalyses Endonucleolytic cleavage of RNA, removing 5'-extranucleotides from tRNA precursor.. In terms of biological role, RNaseP catalyzes the removal of the 5'-leader sequence from pre-tRNA to produce the mature 5'-terminus. It can also cleave other RNA substrates such as 4.5S RNA. The protein component plays an auxiliary but essential role in vivo by binding to the 5'-leader sequence and broadening the substrate specificity of the ribozyme. This is Ribonuclease P protein component from Synechococcus sp. (strain CC9902).